The primary structure comprises 131 residues: Small ribosomal subunit protein eS17 (131 aa).

It belongs to the eukaryotic ribosomal protein eS17 family.

The polypeptide is Small ribosomal subunit protein eS17 (RPS17) (Theileria annulata).